The chain runs to 208 residues: Large ribosomal subunit protein uL3 (208 aa).

The protein belongs to the universal ribosomal protein uL3 family. As to quaternary structure, part of the 50S ribosomal subunit. Forms a cluster with proteins L14 and L19.

In terms of biological role, one of the primary rRNA binding proteins, it binds directly near the 3'-end of the 23S rRNA, where it nucleates assembly of the 50S subunit. This chain is Large ribosomal subunit protein uL3, found in Desulfosudis oleivorans (strain DSM 6200 / JCM 39069 / Hxd3) (Desulfococcus oleovorans).